A 354-amino-acid chain; its full sequence is DNA polymerase IV (354 aa).

Residues 6 to 187 (IIHVDCDCFY…LPVARLHGVG (182 aa)) form the UmuC domain. Residues Asp-10 and Asp-105 each coordinate Mg(2+). Glu-106 is an active-site residue.

It belongs to the DNA polymerase type-Y family. As to quaternary structure, monomer. The cofactor is Mg(2+).

It localises to the cytoplasm. The catalysed reaction is DNA(n) + a 2'-deoxyribonucleoside 5'-triphosphate = DNA(n+1) + diphosphate. Its function is as follows. Poorly processive, error-prone DNA polymerase involved in untargeted mutagenesis. Copies undamaged DNA at stalled replication forks, which arise in vivo from mismatched or misaligned primer ends. These misaligned primers can be extended by PolIV. Exhibits no 3'-5' exonuclease (proofreading) activity. May be involved in translesional synthesis, in conjunction with the beta clamp from PolIII. This is DNA polymerase IV from Pseudomonas putida (strain ATCC 700007 / DSM 6899 / JCM 31910 / BCRC 17059 / LMG 24140 / F1).